A 170-amino-acid polypeptide reads, in one-letter code: Urease accessory protein UreE (170 aa).

Belongs to the UreE family.

It localises to the cytoplasm. In terms of biological role, involved in urease metallocenter assembly. Binds nickel. Probably functions as a nickel donor during metallocenter assembly. The polypeptide is Urease accessory protein UreE (Helicobacter pylori (strain HPAG1)).